The primary structure comprises 202 residues: Putative transposon Tn552 DNA-invertase bin3 (202 aa).

The Resolvase/invertase-type recombinase catalytic domain maps to 1-143; sequence MIIGYARVSS…QGIQVAKEKG (143 aa). Serine 9 acts as the O-(5'-phospho-DNA)-serine intermediate in catalysis.

It belongs to the site-specific recombinase resolvase family.

In terms of biological role, potential DNA invertase. The protein is Putative transposon Tn552 DNA-invertase bin3 (bin3) of Staphylococcus aureus.